We begin with the raw amino-acid sequence, 770 residues long: Multifunctional tryptophan biosynthesis protein (770 aa).

The Glutamine amidotransferase type-1 domain maps to 25 to 225 (NVILIDNYDS…LKLTAGTWEG (201 aa)). 76–78 (GPG) lines the L-glutamine pocket. Cys104 acts as the Nucleophile; for GATase activity in catalysis. Residues Gln108 and 154–155 (SL) each bind L-glutamine. Catalysis depends on for GATase activity residues His199 and Glu201. Residues 228 to 251 (KHFGEQSSTTKATVPSNPPPKTDK) form a disordered region. Polar residues predominate over residues 232–242 (EQSSTTKATVP). The indole-3-glycerol phosphate synthase stretch occupies residues 255–519 (ILERIYDHRR…DTATFIAELL (265 aa)). The segment at 535 to 770 (LVKICGTRSE…RAFVQAVRGL (236 aa)) is N-(5'-phosphoribosyl)anthranilate isomerase.

It catalyses the reaction N-(5-phospho-beta-D-ribosyl)anthranilate = 1-(2-carboxyphenylamino)-1-deoxy-D-ribulose 5-phosphate. The catalysed reaction is 1-(2-carboxyphenylamino)-1-deoxy-D-ribulose 5-phosphate + H(+) = (1S,2R)-1-C-(indol-3-yl)glycerol 3-phosphate + CO2 + H2O. The enzyme catalyses chorismate + L-glutamine = anthranilate + pyruvate + L-glutamate + H(+). Its pathway is amino-acid biosynthesis; L-tryptophan biosynthesis; L-tryptophan from chorismate: step 1/5. The protein operates within amino-acid biosynthesis; L-tryptophan biosynthesis; L-tryptophan from chorismate: step 3/5. It participates in amino-acid biosynthesis; L-tryptophan biosynthesis; L-tryptophan from chorismate: step 4/5. Trifunctional enzyme bearing the Gln amidotransferase (GATase) domain of anthranilate synthase, indole-glycerolphosphate synthase, and phosphoribosylanthranilate isomerase activities. The protein is Multifunctional tryptophan biosynthesis protein (trpC) of Aspergillus niger.